The primary structure comprises 357 residues: Glucose-6-phosphatase catalytic subunit 1 (357 aa).

The Lumenal segment spans residues 1–28; that stretch reads MEKGMNVLHDFGIQSTHYLQVNYQDSQD. The chain crosses the membrane as a helical span at residues 29-49; sequence WFILVSVIADLRNAFYVLFPI. The Cytoplasmic portion of the chain corresponds to 50–60; that stretch reads WFHLREAVGIK. The helical transmembrane segment at 61-81 threads the bilayer; the sequence is LLWVAVIGDWLNLVFKWILFG. The Lumenal portion of the chain corresponds to 82 to 117; sequence QRPYWWVMDTDYYSNASVPLIKQFPVTCETGPGSPS. Arg-83 is a binding site for substrate. An N-linked (GlcNAc...) asparagine glycan is attached at Asn-96. The chain crosses the membrane as a helical span at residues 118-138; sequence GHAMGTAGVYYVMVTSTLSMF. Residue His-119 is the Proton donor of the active site. At 139-147 the chain is on the cytoplasmic side; the sequence is RGKKKPTYR. A helical transmembrane segment spans residues 148–168; sequence FRCLNVILWLGFWAVQLNVCL. Topologically, residues 169–170 are lumenal; it reads SR. Arg-170 lines the substrate pocket. Residues 171–191 form a helical membrane-spanning segment; that stretch reads IYLAAHFPHQVVAGVLSGIAV. His-176 functions as the Nucleophile in the catalytic mechanism. Residues 192–209 lie on the Cytoplasmic side of the membrane; it reads AETFRHIQSIYNASLKKY. The helical transmembrane segment at 210-230 threads the bilayer; it reads FFITFFLLSFAIGFYLLLKGL. Residues 231-254 lie on the Lumenal side of the membrane; sequence GVDLLWTLEKARRWCERPEWVHID. The helical transmembrane segment at 255–275 threads the bilayer; sequence TTPFASLLKNVGTLFGLGLAL. At 276 to 291 the chain is on the cytoplasmic side; that stretch reads NSSMYRESCKGTLSKW. The chain crosses the membrane as a helical span at residues 292-312; sequence FPFRLSCIVVSLILLHLFDSL. Topologically, residues 313-320 are lumenal; sequence KPPSQIEL. The helical transmembrane segment at 321-341 threads the bilayer; sequence IFYVLSFCKSAAVPLASVSLI. Residues 342-357 are Cytoplasmic-facing; that stretch reads PYCLARVLGQPDKKSL. Positions 354-357 match the Prevents secretion from ER motif; sequence KKSL.

It belongs to the glucose-6-phosphatase family.

Its subcellular location is the endoplasmic reticulum membrane. The enzyme catalyses D-glucose 6-phosphate + H2O = D-glucose + phosphate. It functions in the pathway carbohydrate biosynthesis; gluconeogenesis. Hydrolyzes glucose-6-phosphate to glucose in the endoplasmic reticulum. Forms with the glucose-6-phosphate transporter (SLC37A4/G6PT) the complex responsible for glucose production in the terminal step of glycogenolysis and gluconeogenesis. Hence, it is the key enzyme in homeostatic regulation of blood glucose levels. This chain is Glucose-6-phosphatase catalytic subunit 1 (G6PC1), found in Felis catus (Cat).